The following is a 335-amino-acid chain: AA9 family lytic polysaccharide monooxygenase A (335 aa).

The signal sequence occupies residues 1–21 (MSSFITKTVLAALVAAAGVRA). Residues histidine 22 and histidine 107 each contribute to the Cu(2+) site. Cysteine 77 and cysteine 196 are oxidised to a cystine. O2 contacts are provided by histidine 182 and glutamine 191. Tyrosine 193 serves as a coordination point for Cu(2+). A disordered region spans residues 241–335 (PKMNIAGGSS…ARRHARDMMN (95 aa)). Residues 251–303 (GAAPSTPATPTTGSGSDTPSNTAAPVESAPAESAAPVESAPAAGNGNQNNGGA) show a composition bias toward low complexity. The span at 321-335 (CKAKKARRHARDMMN) shows a compositional bias: basic residues.

This sequence belongs to the polysaccharide monooxygenase AA9 family. The cofactor is Cu(2+).

The protein localises to the secreted. It carries out the reaction [(1-&gt;4)-beta-D-glucosyl]n+m + reduced acceptor + O2 = 4-dehydro-beta-D-glucosyl-[(1-&gt;4)-beta-D-glucosyl]n-1 + [(1-&gt;4)-beta-D-glucosyl]m + acceptor + H2O.. Functionally, lytic polysaccharide monooxygenase (LPMO) that depolymerizes crystalline and amorphous polysaccharides via the oxidation of scissile alpha- or beta-(1-4)-glycosidic bonds, yielding C1 or C4 oxidation products. Catalysis by LPMOs requires the reduction of the active-site copper from Cu(II) to Cu(I) by a reducing agent and H(2)O(2) or O(2) as a cosubstrate. Is capable of cleaving cellulose, but not chitin. Is also active on tamarind xyloglucan and longer xyloglucan oligosaccharides. Has no activity toward shorter cellooligosaccharides (Glc3-6), as well as toward the xyloglucan-heptamer, birchwood xylan, wheat arabinoxylan, konjac glucomannan, ivory nut mannan, beta-glucan from barley, lichenan from Icelandic moss, starch, and spruce galactoglucomannan. Has unprecedented broad specificity on xyloglucan, cleaving any glycosidicbond in theb-glucan main chain, regardless of xylosyl substitutions. When incubated with a mixture of xyloglucan and cellulose, efficiently attacks the xyloglucan, whereas cellulose conversion is inhibited, suggesting that removal of hemicellulose may be the true function of this LPMO during biomass conversion. The polypeptide is AA9 family lytic polysaccharide monooxygenase A (Gibberella zeae (strain ATCC MYA-4620 / CBS 123657 / FGSC 9075 / NRRL 31084 / PH-1) (Wheat head blight fungus)).